Here is a 254-residue protein sequence, read N- to C-terminus: Phosphoribosylaminoimidazole-succinocarboxamide synthase 1 (254 aa).

Belongs to the SAICAR synthetase family.

It catalyses the reaction 5-amino-1-(5-phospho-D-ribosyl)imidazole-4-carboxylate + L-aspartate + ATP = (2S)-2-[5-amino-1-(5-phospho-beta-D-ribosyl)imidazole-4-carboxamido]succinate + ADP + phosphate + 2 H(+). Its pathway is purine metabolism; IMP biosynthesis via de novo pathway; 5-amino-1-(5-phospho-D-ribosyl)imidazole-4-carboxamide from 5-amino-1-(5-phospho-D-ribosyl)imidazole-4-carboxylate: step 1/2. This chain is Phosphoribosylaminoimidazole-succinocarboxamide synthase 1 (purC1), found in Agrobacterium fabrum (strain C58 / ATCC 33970) (Agrobacterium tumefaciens (strain C58)).